The sequence spans 261 residues: MTHQTHAYHMVNPSPWPLTGALSALLLTSGLMMWFHFNNPTLLVLGLLTNLISSYQWWRDIVREGTYQGHHTKVVQKGLRYGMVLFIISEVFFFLGFFWAFYHSSLAPTPELGGCWPPTGISPLNPLEVPLLNTSILLASGVSITWSHHSLMEGNRKQMIQALMITIALGLYFTALQAMEYYESSFTISDGVYGSTFFVATGFHGLHVIIGTTFLITCLLRQLLYHFTSNHHFGFEAAAWYWHFVDVVWLFLYVSIYWWGS.

Over Met-1–Pro-15 the chain is Mitochondrial matrix. The helical transmembrane segment at Trp-16–Trp-34 threads the bilayer. Over Phe-35–Pro-40 the chain is Mitochondrial intermembrane. Residues Thr-41–Thr-66 form a helical membrane-spanning segment. Residues Tyr-67–Thr-72 lie on the Mitochondrial matrix side of the membrane. A helical membrane pass occupies residues Lys-73–Ser-105. Residues Leu-106 to Glu-128 lie on the Mitochondrial intermembrane side of the membrane. The helical transmembrane segment at Val-129 to Met-152 threads the bilayer. Topologically, residues Glu-153–Asn-155 are mitochondrial matrix. The chain crosses the membrane as a helical span at residues Arg-156–Glu-183. At Ser-184–Asp-190 the chain is on the mitochondrial intermembrane side. Residues Gly-191 to Leu-223 form a helical membrane-spanning segment. The Mitochondrial matrix portion of the chain corresponds to Leu-224 to His-232. A helical membrane pass occupies residues Phe-233–Ile-256. The Mitochondrial intermembrane segment spans residues Tyr-257–Ser-261.

It belongs to the cytochrome c oxidase subunit 3 family. In terms of assembly, component of the cytochrome c oxidase (complex IV, CIV), a multisubunit enzyme composed of 14 subunits. The complex is composed of a catalytic core of 3 subunits MT-CO1, MT-CO2 and MT-CO3, encoded in the mitochondrial DNA, and 11 supernumerary subunits COX4I, COX5A, COX5B, COX6A, COX6B, COX6C, COX7A, COX7B, COX7C, COX8 and NDUFA4, which are encoded in the nuclear genome. The complex exists as a monomer or a dimer and forms supercomplexes (SCs) in the inner mitochondrial membrane with NADH-ubiquinone oxidoreductase (complex I, CI) and ubiquinol-cytochrome c oxidoreductase (cytochrome b-c1 complex, complex III, CIII), resulting in different assemblies (supercomplex SCI(1)III(2)IV(1) and megacomplex MCI(2)III(2)IV(2)).

It is found in the mitochondrion inner membrane. It carries out the reaction 4 Fe(II)-[cytochrome c] + O2 + 8 H(+)(in) = 4 Fe(III)-[cytochrome c] + 2 H2O + 4 H(+)(out). In terms of biological role, component of the cytochrome c oxidase, the last enzyme in the mitochondrial electron transport chain which drives oxidative phosphorylation. The respiratory chain contains 3 multisubunit complexes succinate dehydrogenase (complex II, CII), ubiquinol-cytochrome c oxidoreductase (cytochrome b-c1 complex, complex III, CIII) and cytochrome c oxidase (complex IV, CIV), that cooperate to transfer electrons derived from NADH and succinate to molecular oxygen, creating an electrochemical gradient over the inner membrane that drives transmembrane transport and the ATP synthase. Cytochrome c oxidase is the component of the respiratory chain that catalyzes the reduction of oxygen to water. Electrons originating from reduced cytochrome c in the intermembrane space (IMS) are transferred via the dinuclear copper A center (CU(A)) of subunit 2 and heme A of subunit 1 to the active site in subunit 1, a binuclear center (BNC) formed by heme A3 and copper B (CU(B)). The BNC reduces molecular oxygen to 2 water molecules using 4 electrons from cytochrome c in the IMS and 4 protons from the mitochondrial matrix. This Tachyglossus aculeatus aculeatus (Southeast Australian short-beaked echidna) protein is Cytochrome c oxidase subunit 3 (MT-CO3).